The chain runs to 162 residues: NADH-quinone oxidoreductase subunit I 2 (162 aa).

4Fe-4S ferredoxin-type domains are found at residues 52-82 and 93-122; these read LRRY…IEAG and VRYD…EGPN. 8 residues coordinate [4Fe-4S] cluster: cysteine 62, cysteine 65, cysteine 68, cysteine 72, cysteine 102, cysteine 105, cysteine 108, and cysteine 112.

This sequence belongs to the complex I 23 kDa subunit family. NDH-1 is composed of 14 different subunits. Subunits NuoA, H, J, K, L, M, N constitute the membrane sector of the complex. The cofactor is [4Fe-4S] cluster.

It localises to the cell inner membrane. The catalysed reaction is a quinone + NADH + 5 H(+)(in) = a quinol + NAD(+) + 4 H(+)(out). NDH-1 shuttles electrons from NADH, via FMN and iron-sulfur (Fe-S) centers, to quinones in the respiratory chain. The immediate electron acceptor for the enzyme in this species is believed to be ubiquinone. Couples the redox reaction to proton translocation (for every two electrons transferred, four hydrogen ions are translocated across the cytoplasmic membrane), and thus conserves the redox energy in a proton gradient. The protein is NADH-quinone oxidoreductase subunit I 2 of Rhodopseudomonas palustris (strain HaA2).